Here is a 37-residue protein sequence, read N- to C-terminus: Glucagon-1 (37 aa).

This sequence belongs to the glucagon family.

It localises to the secreted. Its function is as follows. Glucagon plays a key role in glucose metabolism and homeostasis. Regulates blood glucose by increasing gluconeogenesis and decreasing glycolysis. This is Glucagon-1 from Huso dauricus (Kaluga sturgeon).